We begin with the raw amino-acid sequence, 140 residues long: FK506-binding protein 2 (140 aa).

Residues 1–19 (MKFTTGLSVLLFFVLQVFA) form the signal peptide. Residues 43–132 (GDVVSVHYTG…IFETELVDIQ (90 aa)) enclose the PPIase FKBP-type domain.

This sequence belongs to the FKBP-type PPIase family. FKBP2 subfamily.

The protein resides in the endoplasmic reticulum. It carries out the reaction [protein]-peptidylproline (omega=180) = [protein]-peptidylproline (omega=0). Inhibited by both FK506 and rapamycin. Functionally, PPIases accelerate the folding of proteins. It catalyzes the cis-trans isomerization of proline imidic peptide bonds in oligopeptides. The polypeptide is FK506-binding protein 2 (FPR2) (Kluyveromyces lactis (strain ATCC 8585 / CBS 2359 / DSM 70799 / NBRC 1267 / NRRL Y-1140 / WM37) (Yeast)).